Here is a 268-residue protein sequence, read N- to C-terminus: Very-long-chain aldehyde decarbonylase GL1-8 (268 aa).

The next 4 helical transmembrane spans lie at 26–46, 70–90, 107–127, and 164–184; these read IGTF…SLLF, CVVR…ILSY, WTVV…IFYW, and ILFL…HLFT. The 136-residue stretch at 114–249 folds into the Fatty acid hydroxylase domain; it reads VLFFFVLEDF…FIYMDWLFGT (136 aa).

This sequence belongs to the sterol desaturase family. In terms of assembly, homodimer.

The protein resides in the endoplasmic reticulum membrane. The catalysed reaction is a long-chain fatty aldehyde + 2 NADPH + O2 + H(+) = a long-chain alkane + formate + 2 NADP(+) + H2O. Its function is as follows. Aldehyde decarbonylase involved in the conversion of aldehydes to alkanes. Core component of a very-long-chain alkane synthesis complex. The polypeptide is Very-long-chain aldehyde decarbonylase GL1-8 (Oryza sativa subsp. indica (Rice)).